A 200-amino-acid polypeptide reads, in one-letter code: MEKPYNKNEGNLENEGKPEDEVEPDDEGKSDEEEKPDVEGKTECEGKREDEGEPGDEGQLEDEGSQEKQGRSEGEGKPQGEGKPASQAKPESQPRAAEKRPAEDYVPRKAKRKTDRGTDDSPKDSQEDLQERHLSSEEMMRECGDVSRAQEELRKKQKMGGFHWMQRDVQDPFAPRGQRGVRGVRGGGRGQRGLHDIPYL.

A disordered region spans residues 1 to 200 (MEKPYNKNEG…QRGLHDIPYL (200 aa)). Acidic residues predominate over residues 20–36 (DEVEPDDEGKSDEEEKP). Serine 30 is modified (phosphoserine). Residues 37 to 50 (DVEGKTECEGKRED) are compositionally biased toward basic and acidic residues. The span at 51–64 (EGEPGDEGQLEDEG) shows a compositional bias: acidic residues. At serine 65 the chain carries Phosphoserine. Basic and acidic residues-rich tracts occupy residues 65–80 (SQEKQGRSEGEGKPQG), 96–107 (AAEKRPAEDYVP), and 115–154 (DRGTDDSPKDSQEDLQERHLSSEEMMRECGDVSRAQEELR).

The protein belongs to the TFS-II family. TFA subfamily.

The protein resides in the nucleus. In terms of biological role, may be involved in transcriptional regulation. The polypeptide is Transcription elongation factor A protein-like 3 (TCEAL3) (Homo sapiens (Human)).